Here is a 206-residue protein sequence, read N- to C-terminus: Small ribosomal subunit protein uS5 (206 aa).

Positions 1-15 are enriched in polar residues; it reads MTDTPTKQEIQSKND. The disordered stretch occupies residues 1–50; that stretch reads MTDTPTKQEIQSKNDNVPAATPVEQKKNNRNDRKRNRRGDSKNLERDSDW. Residues 38 to 50 are compositionally biased toward basic and acidic residues; it reads RGDSKNLERDSDW. One can recognise an S5 DRBM domain in the interval 50–113; it reads WQERVVQIRR…SDGKKNLVRV (64 aa).

This sequence belongs to the universal ribosomal protein uS5 family. In terms of assembly, part of the 30S ribosomal subunit. Contacts proteins S4 and S8.

Functionally, with S4 and S12 plays an important role in translational accuracy. Its function is as follows. Located at the back of the 30S subunit body where it stabilizes the conformation of the head with respect to the body. The polypeptide is Small ribosomal subunit protein uS5 (Prochlorococcus marinus (strain AS9601)).